The sequence spans 317 residues: Transaldolase (317 aa).

Lys132 (schiff-base intermediate with substrate) is an active-site residue.

This sequence belongs to the transaldolase family. Type 1 subfamily. As to quaternary structure, homodimer.

Its subcellular location is the cytoplasm. It catalyses the reaction D-sedoheptulose 7-phosphate + D-glyceraldehyde 3-phosphate = D-erythrose 4-phosphate + beta-D-fructose 6-phosphate. Its pathway is carbohydrate degradation; pentose phosphate pathway; D-glyceraldehyde 3-phosphate and beta-D-fructose 6-phosphate from D-ribose 5-phosphate and D-xylulose 5-phosphate (non-oxidative stage): step 2/3. Its function is as follows. Transaldolase is important for the balance of metabolites in the pentose-phosphate pathway. The sequence is that of Transaldolase from Actinobacillus succinogenes (strain ATCC 55618 / DSM 22257 / CCUG 43843 / 130Z).